We begin with the raw amino-acid sequence, 423 residues long: Adenylosuccinate synthetase (423 aa).

Residues 12–18 (GDEGKGK) and 40–42 (GHT) each bind GTP. The active-site Proton acceptor is aspartate 13. Residues aspartate 13 and glycine 40 each contribute to the Mg(2+) site. Residues 13–16 (DEGK), 38–41 (NAGH), threonine 129, arginine 143, glutamine 224, threonine 239, and arginine 303 each bind IMP. Catalysis depends on histidine 41, which acts as the Proton donor. 299 to 305 (SVTGRQR) is a binding site for substrate. GTP contacts are provided by residues arginine 305, 331-333 (KGD), and 412-414 (SVG).

Belongs to the adenylosuccinate synthetase family. In terms of assembly, homodimer. Mg(2+) is required as a cofactor.

It localises to the cytoplasm. It carries out the reaction IMP + L-aspartate + GTP = N(6)-(1,2-dicarboxyethyl)-AMP + GDP + phosphate + 2 H(+). It participates in purine metabolism; AMP biosynthesis via de novo pathway; AMP from IMP: step 1/2. Plays an important role in the de novo pathway of purine nucleotide biosynthesis. Catalyzes the first committed step in the biosynthesis of AMP from IMP. The chain is Adenylosuccinate synthetase from Flavobacterium johnsoniae (strain ATCC 17061 / DSM 2064 / JCM 8514 / BCRC 14874 / CCUG 350202 / NBRC 14942 / NCIMB 11054 / UW101) (Cytophaga johnsonae).